The following is a 113-amino-acid chain: Protein RALF-like 31 (113 aa).

Positions M1 to A21 are cleaved as a signal peptide. Residues F22–M58 constitute a propeptide, removed in mature form. 2 cysteine pairs are disulfide-bonded: C76–C86 and C98–C104.

The protein belongs to the plant rapid alkalinization factor (RALF) family. Proteolytically cleaved, probably by S1P, a subtilisin-like serine protease (subtilase).

Its subcellular location is the secreted. Cell signaling peptide that may regulate plant stress, growth, and development. Mediates a rapid alkalinization of extracellular space by mediating a transient increase in the cytoplasmic Ca(2+) concentration leading to a calcium-dependent signaling events through a cell surface receptor and a concomitant activation of some intracellular mitogen-activated protein kinases. The sequence is that of Protein RALF-like 31 (RALFL31) from Arabidopsis thaliana (Mouse-ear cress).